The chain runs to 419 residues: L-rhamnose isomerase (419 aa).

Positions 262, 294, and 296 each coordinate Mn(2+).

This sequence belongs to the rhamnose isomerase family. In terms of assembly, homotetramer. It depends on Mn(2+) as a cofactor.

The protein resides in the cytoplasm. The catalysed reaction is L-rhamnopyranose = L-rhamnulose. The protein operates within carbohydrate degradation; L-rhamnose degradation; glycerone phosphate from L-rhamnose: step 1/3. Catalyzes the interconversion of L-rhamnose and L-rhamnulose. The protein is L-rhamnose isomerase of Escherichia coli O9:H4 (strain HS).